The following is a 245-amino-acid chain: Outer membrane protein assembly factor BamD (245 aa).

The signal sequence occupies residues 1 to 19; it reads MTRMKYLVAAATLSLFLAG. A lipid anchor (N-palmitoyl cysteine) is attached at cysteine 20. Cysteine 20 carries the S-diacylglycerol cysteine lipid modification.

Belongs to the BamD family. In terms of assembly, part of the Bam complex, which is composed of the outer membrane protein BamA, and four lipoproteins BamB, BamC, BamD and BamE.

It localises to the cell outer membrane. Part of the outer membrane protein assembly complex, which is involved in assembly and insertion of beta-barrel proteins into the outer membrane. Constitutes, with BamA, the core component of the assembly machinery. In Escherichia coli O157:H7, this protein is Outer membrane protein assembly factor BamD.